Consider the following 138-residue polypeptide: Small ribosomal subunit protein uS12m (138 aa).

A mitochondrion-targeting transit peptide spans 1-29; sequence MSWSGLLHGLNTSLTCGPALVPRLWATCS. Positions 36-56 are disordered; the sequence is MHRLGPPKRPPRKLGPTEGRP.

Belongs to the universal ribosomal protein uS12 family. In terms of assembly, component of the mitochondrial small ribosomal subunit (mt-SSU). Mature mammalian 55S mitochondrial ribosomes consist of a small (28S) and a large (39S) subunit. The 28S small subunit contains a 12S ribosomal RNA (12S mt-rRNA) and 30 different proteins. The 39S large subunit contains a 16S rRNA (16S mt-rRNA), a copy of mitochondrial valine transfer RNA (mt-tRNA(Val)), which plays an integral structural role, and 52 different proteins.

It is found in the mitochondrion. The protein is Small ribosomal subunit protein uS12m (MRPS12) of Homo sapiens (Human).